Reading from the N-terminus, the 1456-residue chain is Macrophage mannose receptor 1 (1456 aa).

Residues 1-19 form the signal peptide; sequence MRLLLLLAFISVIPVSVQL. Topologically, residues 20-1388 are extracellular; that stretch reads LDARQFLIYN…DPQPKGSSKA (1369 aa). The 121-residue stretch at 22-142 folds into the Ricin B-type lectin domain; the sequence is ARQFLIYNED…SGLWSRWKVY (121 aa). Cystine bridges form between cysteine 35/cysteine 49, cysteine 74/cysteine 91, cysteine 102/cysteine 149, cysteine 168/cysteine 194, cysteine 182/cysteine 209, cysteine 247/cysteine 340, and cysteine 316/cysteine 332. Residue asparagine 104 is glycosylated (N-linked (GlcNAc...) asparagine). The Fibronectin type-II domain occupies 163–211; the sequence is ANGAVCAFPFKFENKWYADCTSAGRSDGWLWCGTTTDYDKDKLFGFCPL. Residues 225–341 enclose the C-type lectin 1 domain; it reads LTGILYQINS…CVQKLGYICK (117 aa). An N-linked (GlcNAc...) asparagine glycan is attached at asparagine 344. C-type lectin domains lie at 369–487, 511–626, 655–778, and 807–923; these read YAGH…YICK, HGFY…FVCK, KTSM…WICQ, and YKDY…FICQ. 2 disulfide bridges follow: cysteine 391–cysteine 486 and cysteine 463–cysteine 478. N-linked (GlcNAc...) asparagine glycosylation is present at asparagine 529. 6 cysteine pairs are disulfide-bonded: cysteine 532-cysteine 625, cysteine 600-cysteine 617, cysteine 680-cysteine 777, cysteine 753-cysteine 769, cysteine 828-cysteine 922, and cysteine 899-cysteine 914. 2 N-linked (GlcNAc...) asparagine glycosylation sites follow: asparagine 926 and asparagine 930. C-type lectin domains follow at residues 951–1079, 1101–1212, and 1240–1355; these read YKNK…YICQ, YGKS…FLCK, and FYGH…FICK. 6 cysteine pairs are disulfide-bonded: cysteine 976–cysteine 1078, cysteine 1051–cysteine 1070, cysteine 1122–cysteine 1211, cysteine 1189–cysteine 1203, cysteine 1262–cysteine 1354, and cysteine 1331–cysteine 1346. An N-linked (GlcNAc...) asparagine glycan is attached at asparagine 1159. N-linked (GlcNAc...) asparagine glycosylation occurs at asparagine 1204. The helical transmembrane segment at 1389 to 1409 threads the bilayer; that stretch reads AGVVTVVLLIVIGAGVAAYFF. At 1410-1456 the chain is on the cytoplasmic side; that stretch reads YKKRHALHIPQEATFENTLYFNSNLSPGTSDTKDLMGNIEQNEHAII.

In terms of tissue distribution, detected in macrophages.

It localises to the endosome membrane. The protein localises to the cell membrane. In terms of biological role, mediates the endocytosis of glycoproteins by macrophages. Binds both sulfated and non-sulfated polysaccharide chains. Acts as phagocytic receptor for bacteria, fungi and other pathogens. The protein is Macrophage mannose receptor 1 (Mrc1) of Mus musculus (Mouse).